Here is a 384-residue protein sequence, read N- to C-terminus: Dual-specificity RNA methyltransferase RlmN (384 aa).

The active-site Proton acceptor is the Glu105. The 240-residue stretch at 111–350 (EDDRATLCVS…TIVRKTRGDD (240 aa)) folds into the Radical SAM core domain. Cys118 and Cys355 are disulfide-bonded. Cys125, Cys129, and Cys132 together coordinate [4Fe-4S] cluster. S-adenosyl-L-methionine is bound by residues 179 to 180 (GE), Ser211, 233 to 235 (SLH), and Asn312. Residue Cys355 is the S-methylcysteine intermediate of the active site.

The protein belongs to the radical SAM superfamily. RlmN family. It depends on [4Fe-4S] cluster as a cofactor.

Its subcellular location is the cytoplasm. It carries out the reaction adenosine(2503) in 23S rRNA + 2 reduced [2Fe-2S]-[ferredoxin] + 2 S-adenosyl-L-methionine = 2-methyladenosine(2503) in 23S rRNA + 5'-deoxyadenosine + L-methionine + 2 oxidized [2Fe-2S]-[ferredoxin] + S-adenosyl-L-homocysteine. The enzyme catalyses adenosine(37) in tRNA + 2 reduced [2Fe-2S]-[ferredoxin] + 2 S-adenosyl-L-methionine = 2-methyladenosine(37) in tRNA + 5'-deoxyadenosine + L-methionine + 2 oxidized [2Fe-2S]-[ferredoxin] + S-adenosyl-L-homocysteine. Its function is as follows. Specifically methylates position 2 of adenine 2503 in 23S rRNA and position 2 of adenine 37 in tRNAs. m2A2503 modification seems to play a crucial role in the proofreading step occurring at the peptidyl transferase center and thus would serve to optimize ribosomal fidelity. In Escherichia coli O6:H1 (strain CFT073 / ATCC 700928 / UPEC), this protein is Dual-specificity RNA methyltransferase RlmN.